The following is a 123-amino-acid chain: Large ribosomal subunit protein uL29 (123 aa).

The interval 84–123 is disordered; it reads RPKKTRAMRRRLNKHEEGLKTKKQQRKERLYPPRKYAVKA. Basic residues predominate over residues 86 to 96; it reads KKTRAMRRRLN.

This sequence belongs to the universal ribosomal protein uL29 family. Component of the large ribosomal subunit.

It localises to the cytoplasm. In terms of biological role, component of the large ribosomal subunit. The ribosome is a large ribonucleoprotein complex responsible for the synthesis of proteins in the cell. This chain is Large ribosomal subunit protein uL29 (RPL35), found in Ophiophagus hannah (King cobra).